The chain runs to 205 residues: Putative 3-methyladenine DNA glycosylase (205 aa).

The protein belongs to the DNA glycosylase MPG family.

This Staphylococcus epidermidis (strain ATCC 35984 / DSM 28319 / BCRC 17069 / CCUG 31568 / BM 3577 / RP62A) protein is Putative 3-methyladenine DNA glycosylase.